A 146-amino-acid chain; its full sequence is Large ribosomal subunit protein eL32 (146 aa).

The protein belongs to the eukaryotic ribosomal protein eL32 family.

This is Large ribosomal subunit protein eL32 (rpl32e) from Methanocaldococcus jannaschii (strain ATCC 43067 / DSM 2661 / JAL-1 / JCM 10045 / NBRC 100440) (Methanococcus jannaschii).